The primary structure comprises 369 residues: Phenylalanine--tRNA ligase alpha subunit (369 aa).

E269 provides a ligand contact to Mg(2+).

The protein belongs to the class-II aminoacyl-tRNA synthetase family. Phe-tRNA synthetase alpha subunit type 1 subfamily. In terms of assembly, tetramer of two alpha and two beta subunits. The cofactor is Mg(2+).

Its subcellular location is the cytoplasm. The catalysed reaction is tRNA(Phe) + L-phenylalanine + ATP = L-phenylalanyl-tRNA(Phe) + AMP + diphosphate + H(+). The protein is Phenylalanine--tRNA ligase alpha subunit of Brucella abortus (strain 2308).